The primary structure comprises 380 residues: PqqA peptide cyclase (380 aa).

The 216-residue stretch at 8–223 folds into the Radical SAM core domain; the sequence is VNPPLWLLAE…VADYRQKMAA (216 aa). 3 residues coordinate [4Fe-4S] cluster: C22, C26, and C29.

The protein belongs to the radical SAM superfamily. PqqE family. Interacts with PqqD. The interaction is necessary for activity of PqqE. It depends on [4Fe-4S] cluster as a cofactor.

It carries out the reaction [PQQ precursor protein] + S-adenosyl-L-methionine = E-Y cross-linked-[PQQ precursor protein] + 5'-deoxyadenosine + L-methionine + H(+). It participates in cofactor biosynthesis; pyrroloquinoline quinone biosynthesis. Catalyzes the cross-linking of a glutamate residue and a tyrosine residue in the PqqA protein as part of the biosynthesis of pyrroloquinoline quinone (PQQ). This chain is PqqA peptide cyclase, found in Klebsiella pneumoniae (strain 342).